The sequence spans 96 residues: Aspartyl/glutamyl-tRNA(Asn/Gln) amidotransferase subunit C (96 aa).

Belongs to the GatC family. As to quaternary structure, heterotrimer of A, B and C subunits.

It carries out the reaction L-glutamyl-tRNA(Gln) + L-glutamine + ATP + H2O = L-glutaminyl-tRNA(Gln) + L-glutamate + ADP + phosphate + H(+). The catalysed reaction is L-aspartyl-tRNA(Asn) + L-glutamine + ATP + H2O = L-asparaginyl-tRNA(Asn) + L-glutamate + ADP + phosphate + 2 H(+). In terms of biological role, allows the formation of correctly charged Asn-tRNA(Asn) or Gln-tRNA(Gln) through the transamidation of misacylated Asp-tRNA(Asn) or Glu-tRNA(Gln) in organisms which lack either or both of asparaginyl-tRNA or glutaminyl-tRNA synthetases. The reaction takes place in the presence of glutamine and ATP through an activated phospho-Asp-tRNA(Asn) or phospho-Glu-tRNA(Gln). The polypeptide is Aspartyl/glutamyl-tRNA(Asn/Gln) amidotransferase subunit C (Fusobacterium nucleatum subsp. nucleatum (strain ATCC 25586 / DSM 15643 / BCRC 10681 / CIP 101130 / JCM 8532 / KCTC 2640 / LMG 13131 / VPI 4355)).